Here is a 299-residue protein sequence, read N- to C-terminus: Ribosomal RNA small subunit methyltransferase H (299 aa).

Residues 45–47 (GGH), Asp-64, Phe-92, Asp-108, and Gln-115 each bind S-adenosyl-L-methionine. Residues 275-299 (PQSDEQAKNPRSRSAKLRLAQRKEQ) form a disordered region. Basic residues predominate over residues 284–299 (PRSRSAKLRLAQRKEQ).

Belongs to the methyltransferase superfamily. RsmH family.

The protein localises to the cytoplasm. The enzyme catalyses cytidine(1402) in 16S rRNA + S-adenosyl-L-methionine = N(4)-methylcytidine(1402) in 16S rRNA + S-adenosyl-L-homocysteine + H(+). Its function is as follows. Specifically methylates the N4 position of cytidine in position 1402 (C1402) of 16S rRNA. The sequence is that of Ribosomal RNA small subunit methyltransferase H from Gloeothece citriformis (strain PCC 7424) (Cyanothece sp. (strain PCC 7424)).